The following is a 436-amino-acid chain: Homeobox protein PKNOX1 (436 aa).

Positions 24–49 (LKTEQDPNCSEPDVEGVSPPPVGSQT) are disordered. Residues S33 and S41 each carry the phosphoserine modification. Positions 80-163 (GSEGTTSASF…MNSETLLSGE (84 aa)) constitute an MEIS N-terminal domain. Positions 259-321 (SKNKRGVLPK…NARRRILQPM (63 aa)) form a DNA-binding region, homeobox; TALE-type. The interval 401 to 436 (AEQSEDDSVDSTGDGGAALAPGHLGGLVLENSDSLQ) is disordered.

The protein belongs to the TALE/MEIS homeobox family. Interacts with MN1.

It localises to the nucleus. Activates transcription in the presence of PBX1A and HOXA1. This chain is Homeobox protein PKNOX1, found in Bos taurus (Bovine).